We begin with the raw amino-acid sequence, 471 residues long: UDP-N-acetylmuramoylalanine--D-glutamate ligase (471 aa).

123–129 (GTNGKST) is an ATP binding site.

Belongs to the MurCDEF family.

The protein localises to the cytoplasm. The catalysed reaction is UDP-N-acetyl-alpha-D-muramoyl-L-alanine + D-glutamate + ATP = UDP-N-acetyl-alpha-D-muramoyl-L-alanyl-D-glutamate + ADP + phosphate + H(+). It functions in the pathway cell wall biogenesis; peptidoglycan biosynthesis. Cell wall formation. Catalyzes the addition of glutamate to the nucleotide precursor UDP-N-acetylmuramoyl-L-alanine (UMA). This Caulobacter vibrioides (strain ATCC 19089 / CIP 103742 / CB 15) (Caulobacter crescentus) protein is UDP-N-acetylmuramoylalanine--D-glutamate ligase.